The chain runs to 416 residues: UDP-N-acetylglucosamine 1-carboxyvinyltransferase (416 aa).

22–23 (KN) is a binding site for phosphoenolpyruvate. Arginine 91 is a binding site for UDP-N-acetyl-alpha-D-glucosamine. The active-site Proton donor is cysteine 115. Cysteine 115 carries the post-translational modification 2-(S-cysteinyl)pyruvic acid O-phosphothioketal. UDP-N-acetyl-alpha-D-glucosamine-binding positions include 120–124 (RPIDL), aspartate 303, and isoleucine 325.

Belongs to the EPSP synthase family. MurA subfamily.

The protein resides in the cytoplasm. The catalysed reaction is phosphoenolpyruvate + UDP-N-acetyl-alpha-D-glucosamine = UDP-N-acetyl-3-O-(1-carboxyvinyl)-alpha-D-glucosamine + phosphate. Its pathway is cell wall biogenesis; peptidoglycan biosynthesis. Its function is as follows. Cell wall formation. Adds enolpyruvyl to UDP-N-acetylglucosamine. The protein is UDP-N-acetylglucosamine 1-carboxyvinyltransferase of Lawsonia intracellularis (strain PHE/MN1-00).